Consider the following 58-residue polypeptide: MAVPKKKKSKSKRNHRHAVWKGKAALAAQKAISLGKSVLTGKAQGFVYPIDEEEESEE.

This sequence belongs to the bacterial ribosomal protein bL32 family.

This Prochlorococcus marinus (strain MIT 9515) protein is Large ribosomal subunit protein bL32.